A 390-amino-acid chain; its full sequence is Digeranylgeranylglycerophospholipid reductase (390 aa).

FAD is bound by residues Ala-18, Glu-37, Cys-48, Ala-49, Ala-51, Arg-98, Val-122, Asp-278, Gly-290, and Ile-291. Val-368 serves as a coordination point for a 2,3-bis-O-(geranylgeranyl)-sn-glycerol 1-phospholipid.

The protein belongs to the geranylgeranyl reductase family. DGGGPL reductase subfamily. FAD is required as a cofactor.

The catalysed reaction is a 2,3-bis-O-phytanyl-sn-glycerol 1-phospholipid + 8 A = a 2,3-bis-O-(geranylgeranyl)-sn-glycerol 1-phospholipid + 8 AH2. It catalyses the reaction 2,3-bis-O-(phytanyl)-sn-glycerol 1-phosphate + 8 A = 2,3-bis-O-(geranylgeranyl)-sn-glycerol 1-phosphate + 8 AH2. The enzyme catalyses CDP-2,3-bis-O-(geranylgeranyl)-sn-glycerol + 8 AH2 = CDP-2,3-bis-O-(phytanyl)-sn-glycerol + 8 A. It carries out the reaction archaetidylserine + 8 AH2 = 2,3-bis-O-phytanyl-sn-glycero-3-phospho-L-serine + 8 A. It functions in the pathway membrane lipid metabolism; glycerophospholipid metabolism. In terms of biological role, is involved in the reduction of 2,3-digeranylgeranylglycerophospholipids (unsaturated archaeols) into 2,3-diphytanylglycerophospholipids (saturated archaeols) in the biosynthesis of archaeal membrane lipids. Catalyzes the formation of archaetidic acid (2,3-di-O-phytanyl-sn-glyceryl phosphate) from 2,3-di-O-geranylgeranylglyceryl phosphate (DGGGP) via the hydrogenation of each double bond of the isoprenoid chains. Is also probably able to reduce double bonds of geranyl groups in CDP-2,3-bis-O-(geranylgeranyl)-sn-glycerol and archaetidylserine, thus acting at various stages in the biosynthesis of archaeal membrane lipids. This Methanococcus maripaludis (strain C7 / ATCC BAA-1331) protein is Digeranylgeranylglycerophospholipid reductase.